Consider the following 201-residue polypeptide: IMP cyclohydrolase (201 aa).

This sequence belongs to the archaeal IMP cyclohydrolase family.

It catalyses the reaction IMP + H2O = 5-formamido-1-(5-phospho-D-ribosyl)imidazole-4-carboxamide. It functions in the pathway purine metabolism; IMP biosynthesis via de novo pathway; IMP from 5-formamido-1-(5-phospho-D-ribosyl)imidazole-4-carboxamide: step 1/1. Its function is as follows. Catalyzes the cyclization of 5-formylamidoimidazole-4-carboxamide ribonucleotide to IMP. This is IMP cyclohydrolase from Methanococcus maripaludis (strain DSM 14266 / JCM 13030 / NBRC 101832 / S2 / LL).